The sequence spans 139 residues: Small ribosomal subunit protein bS6 (139 aa).

The protein belongs to the bacterial ribosomal protein bS6 family.

In terms of biological role, binds together with bS18 to 16S ribosomal RNA. In Borreliella afzelii (strain PKo) (Borrelia afzelii), this protein is Small ribosomal subunit protein bS6.